The chain runs to 357 residues: MSRTVQLVVIPGDGIGPEVIAEAVKALDAVTAGSGLAFQKTYFSLGADRYLATGDVLTDDDLAAIRGHDAILLGAVGGRPGDPRLAGANVERGLLLRLRFSLDHYVNLRPTTLFPGIASPLAAPGEVDFVVVREGTEGQYVGNGGAIRPGTPHEVANEVSVNTAYGVERVVRYAFEQAGQRRKKLTLVHKTNVLTFAGSLWKRIVDALAAEHPEVAVDYLHVDAATIFLVTDPARFDVIVTDNLFGDILTDLAAAISGGIGLAASGNINPVGEFPSMFEPVHGSAPDIAGEQRADPTAAILSVALLLRHLGERPLAERVERAVTTDLAARSGQMATASQTRTTSQIGDAIAALAAQN.

Arg-99, Arg-109, Arg-133, and Asp-223 together coordinate substrate. Residues Asp-223, Asp-247, and Asp-251 each coordinate Mg(2+). An NAD(+)-binding site is contributed by 283-295 (GSAPDIAGEQRAD).

The protein belongs to the isocitrate and isopropylmalate dehydrogenases family. LeuB type 2 subfamily. Homodimer. Requires Mg(2+) as cofactor. Mn(2+) is required as a cofactor.

It is found in the cytoplasm. The enzyme catalyses (2R,3S)-3-isopropylmalate + NAD(+) = 4-methyl-2-oxopentanoate + CO2 + NADH. It functions in the pathway amino-acid biosynthesis; L-leucine biosynthesis; L-leucine from 3-methyl-2-oxobutanoate: step 3/4. Its function is as follows. Catalyzes the oxidation of 3-carboxy-2-hydroxy-4-methylpentanoate (3-isopropylmalate) to 3-carboxy-4-methyl-2-oxopentanoate. The product decarboxylates to 4-methyl-2 oxopentanoate. The sequence is that of 3-isopropylmalate dehydrogenase from Leifsonia xyli subsp. xyli (strain CTCB07).